A 387-amino-acid polypeptide reads, in one-letter code: 3-ketoacyl-CoA thiolase (387 aa).

Cysteine 91 acts as the Acyl-thioester intermediate in catalysis. Catalysis depends on proton acceptor residues histidine 343 and cysteine 373.

The protein belongs to the thiolase-like superfamily. Thiolase family. As to quaternary structure, heterotetramer of two alpha chains (FadB) and two beta chains (FadA).

The protein resides in the cytoplasm. The catalysed reaction is an acyl-CoA + acetyl-CoA = a 3-oxoacyl-CoA + CoA. Its pathway is lipid metabolism; fatty acid beta-oxidation. In terms of biological role, catalyzes the final step of fatty acid oxidation in which acetyl-CoA is released and the CoA ester of a fatty acid two carbons shorter is formed. This Idiomarina loihiensis (strain ATCC BAA-735 / DSM 15497 / L2-TR) protein is 3-ketoacyl-CoA thiolase.